Here is an 83-residue protein sequence, read N- to C-terminus: Small ribosomal subunit protein bS16 (83 aa).

It belongs to the bacterial ribosomal protein bS16 family.

The polypeptide is Small ribosomal subunit protein bS16 (Shewanella woodyi (strain ATCC 51908 / MS32)).